Here is a 228-residue protein sequence, read N- to C-terminus: DNA-binding response regulator MtrA (228 aa).

The Response regulatory domain occupies 7–120; the sequence is RILVVDDDAS…ELVARVRARL (114 aa). Asp-56 carries the 4-aspartylphosphate modification. The ompR/PhoB-type DNA-binding region spans 128-227; that stretch reads AEMLSIADVE…VRGVGYKAGP (100 aa).

Phosphorylated by MtrB.

Member of the two-component regulatory system MtrA/MtrB. The chain is DNA-binding response regulator MtrA (mtrA) from Mycobacterium bovis (strain ATCC BAA-935 / AF2122/97).